Here is a 436-residue protein sequence, read N- to C-terminus: Cytochrome P450 monooxygenase phqO (436 aa).

C377 lines the heme pocket.

The protein belongs to the cytochrome P450 family. The cofactor is heme.

Its pathway is alkaloid biosynthesis. Cytochrome P450 monooxygenase; part of the gene cluster that mediates the biosynthesis of paraherquamide, a fungal indole alkaloid that belongs to a family of natural products containing a characteristic bicyclo[2.2.2]diazaoctane core. The first steps in the biosynthesis of paraherquamide is the production of the beta-methyl-proline precursor from L-isoleucine. They require oxidation of a terminally hydroxylated L-isoleucine to the corresponding aldehyde by enzymes which have still to be identified. Spontaneous cyclization and dehydration would yield the 4-methyl pyrolline-5-carboxylic acid, which is then reduced by the pyrroline-5-carboxylate reductase phqD leading to the beta-methyl-proline precursor. The next step of paraherquamide biosynthesis involves coupling of beta-methyl-proline and L-tryptophan by the bimodular NRPS phqB, to produce a monooxopiperazine intermediate. The reductase (R) domain of phqB utilizes NADPH for hydride transfer to reduce the thioester bond of the T domain-tethered linear dipeptide to a hemithioaminal intermediate, which spontaneously cleaves the C-S bond to release the aldehyde product. This compound undergoes spontaneous cyclization and dehydration to give a dienamine which is reverse prenylated at C-2 by the reverse prenyltransferase phqJ. The other prenyltransferase present in the cluster, phqI may be a redundant gene in the pathway. During biosynthetic assembly, the key step to produce the polycyclic core is catalyzed by the bifunctional reductase and intramolecular [4+2] Diels-Alderase, phqE, resulting in formation of the [2.2.2] diazaoctane intermediate preparaherquamide. Following formation of preparaherquamide, an indole 2,3-epoxidation-initiated pinacol-like rearrangement is catalyzed by the phqK FAD-dependent monooxygenase. The prenyltransferase phqA, the cytochrome P450 monooxygenase phqL, and the FAD-linked oxidoreductase phqH (or the cytochrome P450 monooxygenase phqM), are proposed to be involved in the formation of the pyran ring. The FAD-dependent monooxygenase phqK is likely responsible for generation of the spiro-oxindole, and the N-methylation is likely mediated by the phqN methyltransferase leading to the isolable natural product paraherquamide F. However, the order of these biosynthetic steps has still to be determined. In late-stage paraherquamide biosynthesis, the third P450 monooxygenase, phqO, is probably responsible for the C-14 hydroxylation, transforming paraherquamide F to paraherquamide G, and paraherquamide E to the final product paraherquamide A. The expansion from the 6-membered ring pyran (in paraherquamides F and G) to the 7-membered dioxepin ring (in paraherquamides A and E) represents a poorly understood but intriguing process that probably involves the 2-oxoglutarate-dependent dioxygenase phqC. Finally, the remaining members of the paraherquamide cluster, including phqI as well as phqM (or phqH), do not have a clearly prescribed role and appear to be redundant. In Penicillium fellutanum, this protein is Cytochrome P450 monooxygenase phqO.